The sequence spans 141 residues: Protein E6 (141 aa).

Zinc fingers lie at residues 27–64 and 101–137; these read CRFC…CSSC and CQYC…CRHC.

The protein belongs to the papillomaviridae E6 protein family. As to quaternary structure, forms homodimers. Interacts with ubiquitin-protein ligase UBE3A/E6-AP; this interaction stimulates UBE3A ubiquitin activity. Interacts with host BAK1.

The protein resides in the host cytoplasm. It localises to the host nucleus. Functionally, plays a major role in the induction and maintenance of cellular transformation. E6 associates with host UBE3A/E6-AP ubiquitin-protein ligase and modulates its activity. Protects host keratinocytes from apoptosis by mediating the degradation of host BAK1. May also inhibit host immune response. The protein is Protein E6 of Homo sapiens (Human).